Here is a 569-residue protein sequence, read N- to C-terminus: Urease subunit alpha (569 aa).

The region spanning G131–F569 is the Urease domain. The Ni(2+) site is built by H136, H138, and K219. K219 bears the N6-carboxylysine mark. Residue H221 participates in substrate binding. Residues H248 and H274 each coordinate Ni(2+). Catalysis depends on H322, which acts as the Proton donor. Ni(2+) is bound at residue D362.

It belongs to the metallo-dependent hydrolases superfamily. Urease alpha subunit family. As to quaternary structure, heterotrimer of UreA (gamma), UreB (beta) and UreC (alpha) subunits. Three heterotrimers associate to form the active enzyme. It depends on Ni cation as a cofactor. In terms of processing, carboxylation allows a single lysine to coordinate two nickel ions.

It localises to the cytoplasm. It carries out the reaction urea + 2 H2O + H(+) = hydrogencarbonate + 2 NH4(+). The protein operates within nitrogen metabolism; urea degradation; CO(2) and NH(3) from urea (urease route): step 1/1. The protein is Urease subunit alpha of Magnetococcus marinus (strain ATCC BAA-1437 / JCM 17883 / MC-1).